A 466-amino-acid polypeptide reads, in one-letter code: SVGFKAGVKDYRLTYYTPDYQTKDTDILAAFRVTPQPGVPPEEAGAAVAAESSTGTWTTVWTDGLTSLDRYKGRCYGIEPVAGEESQFIAYVAYPLDLFEEGSVTNMFTSIVGNVFGFKALRALRLEDLRIPVAYVKTFQGPXHGIQVERDKLNKYGRPLLGCTIKPKLGLSAKNYGRAVYECLRGGLDFTKDDENVNSQPFMRWRDRFVSXAEALYKAQAETGEIKGHYLNATAGTCEEMMKRAVFARELGVPIVMHDYLTGGFTANTTLAHYCRDNGLLLHIHRAMHAVIDRQKNHGMTFRVLAKGLRMSGGDHIHSGTVVGKLEGERDITLGFVDLLRDDFIEKDRSRGIYFTQDWVSLPGVLPVASGGIHVXHMPALTEIFGDDSVLQFGGGTLGHPWGNRPGAVANRVALEACVQARNEGRDLAREGNEIIREAAKWSPELAAACEVWKEIKFEFAAMDVL.

At Lys-5 the chain carries N6,N6,N6-trimethyllysine. Asn-114 and Thr-164 together coordinate substrate. Catalysis depends on Lys-166, which acts as the Proton acceptor. Lys-168 lines the substrate pocket. Mg(2+) is bound by residues Lys-192, Asp-194, and Glu-195. N6-carboxylysine is present on Lys-192. His-285 functions as the Proton acceptor in the catalytic mechanism. Residues Arg-286, His-318, and Ser-370 each contribute to the substrate site.

Belongs to the RuBisCO large chain family. Type I subfamily. In terms of assembly, heterohexadecamer of 8 large chains and 8 small chains; disulfide-linked. The disulfide link is formed within the large subunit homodimers. It depends on Mg(2+) as a cofactor. In terms of processing, the disulfide bond which can form in the large chain dimeric partners within the hexadecamer appears to be associated with oxidative stress and protein turnover.

The protein localises to the plastid. Its subcellular location is the chloroplast. The catalysed reaction is 2 (2R)-3-phosphoglycerate + 2 H(+) = D-ribulose 1,5-bisphosphate + CO2 + H2O. It carries out the reaction D-ribulose 1,5-bisphosphate + O2 = 2-phosphoglycolate + (2R)-3-phosphoglycerate + 2 H(+). In terms of biological role, ruBisCO catalyzes two reactions: the carboxylation of D-ribulose 1,5-bisphosphate, the primary event in carbon dioxide fixation, as well as the oxidative fragmentation of the pentose substrate in the photorespiration process. Both reactions occur simultaneously and in competition at the same active site. This is Ribulose bisphosphate carboxylase large chain from Hedera helix (English ivy).